A 121-amino-acid chain; its full sequence is Small ribosomal subunit protein uS13 (121 aa).

The segment at 99 to 121 (GQRTRTNARTRRGARKTVAGKKK) is disordered. Residues 100–121 (QRTRTNARTRRGARKTVAGKKK) show a composition bias toward basic residues.

Belongs to the universal ribosomal protein uS13 family. As to quaternary structure, part of the 30S ribosomal subunit. Forms a loose heterodimer with protein S19. Forms two bridges to the 50S subunit in the 70S ribosome.

Its function is as follows. Located at the top of the head of the 30S subunit, it contacts several helices of the 16S rRNA. In the 70S ribosome it contacts the 23S rRNA (bridge B1a) and protein L5 of the 50S subunit (bridge B1b), connecting the 2 subunits; these bridges are implicated in subunit movement. Contacts the tRNAs in the A and P-sites. The sequence is that of Small ribosomal subunit protein uS13 from Synechococcus sp. (strain RCC307).